Consider the following 1507-residue polypeptide: Chromatin-remodeling ATPase INO80 (1507 aa).

2 disordered regions span residues 30 to 82 (PEDE…DAED) and 428 to 452 (RKKQ…KRQQ). Residues 38 to 67 (GSSSQDESRSTQGGVVANYSNGSKSRMNAS) show a composition bias toward polar residues. A DBINO domain is found at 350 to 475 (AWINIVRRDI…SHFMQNKTDS (126 aa)). Residues 428–450 (RKKQEKEAAEAFKREQEQRESKR) are compositionally biased toward basic and acidic residues. The 172-residue stretch at 598 to 769 (VNCYEQGLNG…WALLHFIMPM (172 aa)) folds into the Helicase ATP-binding domain. 611–618 (DEMGLGKT) lines the ATP pocket. The Helicase C-terminal domain occupies 1210–1360 (TLDILLKRLR…QLVMTGGHVQ (151 aa)). Residues 1415 to 1507 (LEELEDVDRQ…KGFDPSSSAN (93 aa)) are disordered. The segment covering 1491–1507 (ASVTESNKGFDPSSSAN) has biased composition (polar residues).

This sequence belongs to the SNF2/RAD54 helicase family. As to quaternary structure, component of the INO80 chromatin-remodeling complex. Associates with REF6/EIN6.

Its subcellular location is the nucleus. It catalyses the reaction ATP + H2O = ADP + phosphate + H(+). Functionally, ATPase component of the chromatin remodeling INO80 complex which is involved in transcriptional regulation, DNA replication and DNA repair. Binds DNA. As part of the INO80 complex, remodels chromatin by shifting nucleosomes. The INO80 complex controls ethylene-induced H2A.Z eviction dynamics. Positive regulator of homologous recombination, but not an essential component of homologous recombination. Not involved in the illegitimate repair pathway. The sequence is that of Chromatin-remodeling ATPase INO80 from Arabidopsis thaliana (Mouse-ear cress).